The chain runs to 164 residues: HTH-type transcriptional regulator IscR (164 aa).

Positions 2-131 (RLTSKGRYAV…GSISLEELVK (130 aa)) constitute an HTH rrf2-type domain. The H-T-H motif DNA-binding region spans 28-51 (LADISERQGISLSYLEQLFSRLRK). Residues Cys-92, Cys-98, and Cys-104 each coordinate [2Fe-2S] cluster. Residues 140–164 (DRQDSDKRRTPNGRPQETINVNLRA) are disordered. The span at 152-164 (GRPQETINVNLRA) shows a compositional bias: polar residues.

It depends on [2Fe-2S] cluster as a cofactor.

Functionally, regulates the transcription of several operons and genes involved in the biogenesis of Fe-S clusters and Fe-S-containing proteins. The polypeptide is HTH-type transcriptional regulator IscR (Xenorhabdus nematophila (strain ATCC 19061 / DSM 3370 / CCUG 14189 / LMG 1036 / NCIMB 9965 / AN6)).